A 536-amino-acid polypeptide reads, in one-letter code: MFS-type efflux pump MFS1 (536 aa).

3 helical membrane passes run 30–50 (VTGLKLAVIVTGLCLSVLLVA), 80–100 (YLLTICAFQLIFGKIYTFFPV), and 102–122 (WVFLIAITIFEIGSAICGAAP). The N-linked (GlcNAc...) asparagine glycan is linked to Asn-123. 3 helical membrane-spanning segments follow: residues 133–153 (VAGIGSAGIFSGALIIIAYSI), 163–183 (GAIGGMYGIASVAGPLMGGAF), and 191–211 (WCFYINLPIGAVTILSILIFL). Asn-221 is a glycosylation site (N-linked (GlcNAc...) asparagine). 8 helical membrane-spanning segments follow: residues 234 to 254 (IGTAFFMPSIICLLLALQWGG), 264 to 284 (IIALFVVFAVLISGFIYFQIR), 306 to 326 (FFLFTIGSAFFIMVYYLPIWF), 342 to 362 (IPMVLSLVVLSIASGITVTAI), 366 to 386 (APLYYVSTVLTSIGAGLLTTF), 400 to 420 (IIFGAGVGTGLQLSIIAAQAV), 426 to 446 (VAVGTVIMMFCQTLGGALFVS), and 503 to 523 (TWYVATALAALSVIGSVGMEW).

This sequence belongs to the major facilitator superfamily. TCR/Tet family.

Its subcellular location is the cell membrane. Functionally, MFS-type efflux pump involved in the modulation susceptibility to azoles, including fluconazole, itraconazole, miconazole and voriconazole. Also confers increased resistance chloramphenicol and thiamphenicol, suggesting that it acts as a pleiotropic drug transporter with a broad substrate spectrum. Finally, increases the tolerance to cycloheximide when expressed in S.cerevisiae, but not in dermatophyte species. The protein is MFS-type efflux pump MFS1 of Arthroderma benhamiae (strain ATCC MYA-4681 / CBS 112371) (Trichophyton mentagrophytes).